The primary structure comprises 282 residues: Pantothenate synthetase (282 aa).

29-36 serves as a coordination point for ATP; the sequence is MGFLHEGH. His36 functions as the Proton donor in the catalytic mechanism. Gln60 is a (R)-pantoate binding site. Position 60 (Gln60) interacts with beta-alanine. ATP is bound at residue 146-149; it reads GEKD. Gln152 lines the (R)-pantoate pocket. ATP contacts are provided by residues Ile175 and 183–186; that span reads KSSR.

This sequence belongs to the pantothenate synthetase family. Homodimer.

Its subcellular location is the cytoplasm. The enzyme catalyses (R)-pantoate + beta-alanine + ATP = (R)-pantothenate + AMP + diphosphate + H(+). The protein operates within cofactor biosynthesis; (R)-pantothenate biosynthesis; (R)-pantothenate from (R)-pantoate and beta-alanine: step 1/1. Functionally, catalyzes the condensation of pantoate with beta-alanine in an ATP-dependent reaction via a pantoyl-adenylate intermediate. This is Pantothenate synthetase from Clostridioides difficile (strain 630) (Peptoclostridium difficile).